The sequence spans 156 residues: Protein BUNDLE SHEATH DEFECTIVE 2, chloroplastic (156 aa).

Residues 1 to 41 constitute a chloroplast transit peptide; sequence MNSAALNARTASVAPQPQACHACKCRQLLSRRVPPAQRQVE. Zn(2+)-binding residues include Cys78, Cys81, Cys89, Cys92, Cys133, Cys136, Cys144, and Cys147.

It belongs to the BSD2 chaperone family. As to quaternary structure, interacts with the RuBisCo large subunit (RbcL) assembled as an intermediate complex made of eight RbcL and eight BSD2 subunits.

The protein resides in the plastid. It localises to the chloroplast stroma. Chloroplast chaperone required for RuBisCo biogenesis and translational regulation of the RuBisCo large subunit (RbcL). Stabilizes an end-state assembly intermediate of eight RbcL subunits until the small subunits (RBCSs) become available to produce a complete stable RuBisCo complex containing eight small and eight large subunits. The sequence is that of Protein BUNDLE SHEATH DEFECTIVE 2, chloroplastic from Chlamydomonas reinhardtii (Chlamydomonas smithii).